Consider the following 188-residue polypeptide: Small ribosomal subunit protein bS18c (188 aa).

Over residues 1-19 (MNNQSFNNFSQVNSNSSFF) the composition is skewed to low complexity. Positions 1–79 (MNNQSFNNFS…TSNKRKVLSV (79 aa)) are disordered. Residues 25 to 71 (NLQNTNLEMTNGTNPPSSFSKQTPQKRQSFGTNTNFSKGNSSRGSTS) show a composition bias toward polar residues.

The protein belongs to the bacterial ribosomal protein bS18 family. As to quaternary structure, part of the 30S ribosomal subunit.

Its subcellular location is the plastid. The protein localises to the chloroplast. This Tetradesmus obliquus (Green alga) protein is Small ribosomal subunit protein bS18c.